The following is a 205-amino-acid chain: GTP cyclohydrolase-2 (205 aa).

49–53 (RIHSE) lines the GTP pocket. Positions 54, 65, and 67 each coordinate Zn(2+). GTP contacts are provided by residues glutamine 70, 92-94 (EGR), and threonine 114. The Proton acceptor role is filled by aspartate 126. Residue arginine 128 is the Nucleophile of the active site. 2 residues coordinate GTP: threonine 149 and lysine 154.

The protein belongs to the GTP cyclohydrolase II family. It depends on Zn(2+) as a cofactor.

The enzyme catalyses GTP + 4 H2O = 2,5-diamino-6-hydroxy-4-(5-phosphoribosylamino)-pyrimidine + formate + 2 phosphate + 3 H(+). It functions in the pathway cofactor biosynthesis; riboflavin biosynthesis; 5-amino-6-(D-ribitylamino)uracil from GTP: step 1/4. In terms of biological role, catalyzes the conversion of GTP to 2,5-diamino-6-ribosylamino-4(3H)-pyrimidinone 5'-phosphate (DARP), formate and pyrophosphate. In Shewanella sediminis (strain HAW-EB3), this protein is GTP cyclohydrolase-2.